A 494-amino-acid chain; its full sequence is UPF0371 protein SPJ_0333 (494 aa).

It belongs to the UPF0371 family.

The chain is UPF0371 protein SPJ_0333 from Streptococcus pneumoniae (strain JJA).